The chain runs to 149 residues: UPF0260 protein PA1299 (149 aa).

The protein belongs to the UPF0260 family.

The polypeptide is UPF0260 protein PA1299 (Pseudomonas aeruginosa (strain ATCC 15692 / DSM 22644 / CIP 104116 / JCM 14847 / LMG 12228 / 1C / PRS 101 / PAO1)).